The primary structure comprises 453 residues: Trigger factor (453 aa).

The PPIase FKBP-type domain occupies 171–256; the sequence is GDRITISFKG…VSLIEAPEEL (86 aa).

This sequence belongs to the FKBP-type PPIase family. Tig subfamily.

The protein localises to the cytoplasm. It carries out the reaction [protein]-peptidylproline (omega=180) = [protein]-peptidylproline (omega=0). Functionally, involved in protein export. Acts as a chaperone by maintaining the newly synthesized protein in an open conformation. Functions as a peptidyl-prolyl cis-trans isomerase. The sequence is that of Trigger factor from Nitrobacter winogradskyi (strain ATCC 25391 / DSM 10237 / CIP 104748 / NCIMB 11846 / Nb-255).